The chain runs to 614 residues: Jacalin-related lectin 14 (614 aa).

Jacalin-type lectin domains lie at 27 to 169 (VQKM…YFSW), 172 to 314 (PRKM…YFTT), 317 to 462 (PTKS…YFSP), and 468 to 611 (AEKL…HVVP).

The protein belongs to the jacalin lectin family.

The sequence is that of Jacalin-related lectin 14 (JAL14) from Arabidopsis thaliana (Mouse-ear cress).